Reading from the N-terminus, the 219-residue chain is Vacuolar protein sorting-associated protein 32 homolog 2 (219 aa).

2 coiled-coil regions span residues 10-41 and 117-176; these read KQEA…KKAG and TNID…QLLQ. A disordered region spans residues 168-219; it reads EELESQLLQPATTAPPLPSVPVPAGRQPARPVPQKRTAEEEELAALQAEMAL.

The protein belongs to the SNF7 family. As to quaternary structure, component of the endosomal sorting required for transport complex III (ESCRT-III), composed at least of VPS2, VPS20, VPS24 and VPS32. Interacts with SKD1. Interacts with BRO1/ALIX.

It localises to the endosome. In terms of biological role, component of the ESCRT-III complex, which is required for multivesicular bodies (MVBs) formation and sorting of endosomal cargo proteins into MVBs. The ESCRT-III complex is probably involved in the concentration of MVB cargo. In Arabidopsis thaliana (Mouse-ear cress), this protein is Vacuolar protein sorting-associated protein 32 homolog 2 (VPS32.2).